The following is a 360-amino-acid chain: C-C chemokine receptor type 4 (360 aa).

Residues 1-39 lie on the Extracellular side of the membrane; sequence MNPTDIADTTLDESIYSNYYLYESIPKPCTKEGIKAFGE. Residues 40-67 form a helical membrane-spanning segment; the sequence is LFLPPLYSLVFVFGLLGNSVVVLVLFKY. At 68 to 77 the chain is on the cytoplasmic side; that stretch reads KRLRSMTDVY. A helical membrane pass occupies residues 78-98; the sequence is LLNLAISDLLFVFSLPFWGYY. Residues 99 to 111 lie on the Extracellular side of the membrane; it reads AADQWVFGLGLCK. C110 and C187 are disulfide-bonded. A helical transmembrane segment spans residues 112–133; that stretch reads MISWMYLVGFYSGIFFVMLMSI. Topologically, residues 134–150 are cytoplasmic; the sequence is DRYLAIVHAVFSLRART. A helical transmembrane segment spans residues 151 to 175; it reads LTYGVITSLATWSVAVFASLPGFLF. Residues 176 to 206 are Extracellular-facing; it reads STCYTERNHTYCKTKYSLNSTTWKVLSSLEI. N183 and N194 each carry an N-linked (GlcNAc...) asparagine glycan. The chain crosses the membrane as a helical span at residues 207–226; that stretch reads NILGLVIPLGIMLFCYSMII. The Cytoplasmic segment spans residues 227–242; that stretch reads RTLQHCKNEKKNKAVK. A helical membrane pass occupies residues 243–267; it reads MIFAVVVLFLGFWTPYNIVLFLETL. The Extracellular portion of the chain corresponds to 268 to 284; it reads VELEVLQDCTFERYLDY. A helical membrane pass occupies residues 285–308; the sequence is AIQATETLAFVHCCLNPIIYFFLG. At 309–360 the chain is on the cytoplasmic side; it reads EKFRKYILQLFKTCRGLFVLCQYCGLLQIYSADTPSSSYTQSTMDHDLHDAL.

Belongs to the G-protein coupled receptor 1 family. In terms of processing, in natural killer cells, CCL22 binding induces phosphorylation on yet undefined Ser/Thr residues, most probably by beta-adrenergic receptor kinases 1 and 2. In terms of tissue distribution, predominantly expressed in the thymus, in peripheral blood leukocytes, including T-cells, mostly CD4+ cells, and basophils, and in platelets; at lower levels, in the spleen and in monocytes. Detected also in macrophages, IL-2-activated natural killer cells and skin-homing memory T-cells, mostly the ones expressing the cutaneous lymphocyte antigen (CLA). Expressed in brain microvascular and coronary artery endothelial cells.

The protein localises to the cell membrane. High affinity receptor for the C-C type chemokines CCL17/TARC, CCL22/MDC and CKLF isoform 1/CKLF1. The activity of this receptor is mediated by G(i) proteins which activate a phosphatidylinositol-calcium second messenger system. Can function as a chemoattractant homing receptor on circulating memory lymphocytes and as a coreceptor for some primary HIV-2 isolates. In the CNS, could mediate hippocampal-neuron survival. This chain is C-C chemokine receptor type 4 (CCR4), found in Homo sapiens (Human).